The sequence spans 147 residues: Large ribosomal subunit protein uL16 (147 aa).

The interval 1 to 20 is disordered; sequence MLMPKKVKHRKVQRGRMKGK.

This sequence belongs to the universal ribosomal protein uL16 family. As to quaternary structure, part of the 50S ribosomal subunit.

Functionally, binds 23S rRNA and is also seen to make contacts with the A and possibly P site tRNAs. The sequence is that of Large ribosomal subunit protein uL16 from Clostridium kluyveri (strain ATCC 8527 / DSM 555 / NBRC 12016 / NCIMB 10680 / K1).